A 309-amino-acid chain; its full sequence is Protein FdhE (309 aa).

Belongs to the FdhE family.

It is found in the cytoplasm. Its function is as follows. Necessary for formate dehydrogenase activity. This is Protein FdhE from Shigella boydii serotype 18 (strain CDC 3083-94 / BS512).